The sequence spans 263 residues: Oxidoreductase UcpA (263 aa).

10-32 is a binding site for NAD(+); sequence LITGASQGIGEGIARVFARHGAN. Ser-141 is a substrate binding site. The active-site Proton acceptor is Tyr-155.

Belongs to the short-chain dehydrogenases/reductases (SDR) family.

The polypeptide is Oxidoreductase UcpA (ucpA) (Salmonella typhi).